Here is a 331-residue protein sequence, read N- to C-terminus: Phosphate acyltransferase (331 aa).

This sequence belongs to the PlsX family. Homodimer. Probably interacts with PlsY.

The protein resides in the cytoplasm. It catalyses the reaction a fatty acyl-[ACP] + phosphate = an acyl phosphate + holo-[ACP]. The protein operates within lipid metabolism; phospholipid metabolism. Functionally, catalyzes the reversible formation of acyl-phosphate (acyl-PO(4)) from acyl-[acyl-carrier-protein] (acyl-ACP). This enzyme utilizes acyl-ACP as fatty acyl donor, but not acyl-CoA. The polypeptide is Phosphate acyltransferase (Clostridium acetobutylicum (strain ATCC 824 / DSM 792 / JCM 1419 / IAM 19013 / LMG 5710 / NBRC 13948 / NRRL B-527 / VKM B-1787 / 2291 / W)).